A 246-amino-acid polypeptide reads, in one-letter code: MAQQGSGYQARYKRILLKLSGEALMGSEEFGIDPKVLDRMALEVGQLVGIGVQVGLVIGGGNLFRGAALSAAGMDRVTGDHMGMLATVMNALAMRDALERANITAIVMSAISMVGVTDHYDRRKAMRHLSAKEVVIFAAGTGNPFFTTDSAACLRAIEIDADVVLKATKVDGVYTADPFKDPNAEKFDHLTYDEVLDRKLGVMDLTAICLCRDHKMPLRVFNMNKPGALLNIVHGGAEGTLIEEAQ.

Residue 18 to 21 participates in ATP binding; that stretch reads KLSG. Glycine 60 is a binding site for UMP. ATP is bound by residues glycine 61 and arginine 65. UMP-binding positions include aspartate 80 and 141–148; that span reads TGNPFFTT. ATP is bound by residues threonine 168, tyrosine 174, and aspartate 177.

It belongs to the UMP kinase family. Homohexamer.

The protein localises to the cytoplasm. It carries out the reaction UMP + ATP = UDP + ADP. Its pathway is pyrimidine metabolism; CTP biosynthesis via de novo pathway; UDP from UMP (UMPK route): step 1/1. With respect to regulation, inhibited by UTP. In terms of biological role, catalyzes the reversible phosphorylation of UMP to UDP. This Pseudomonas syringae pv. syringae (strain B728a) protein is Uridylate kinase.